The primary structure comprises 59 residues: UPF0434 protein Ping_0902 (59 aa).

The protein belongs to the UPF0434 family.

The protein is UPF0434 protein Ping_0902 of Psychromonas ingrahamii (strain DSM 17664 / CCUG 51855 / 37).